We begin with the raw amino-acid sequence, 175 residues long: uncharacterized protein (175 aa).

2 disordered regions span residues 68-111 (NKSN…DDDQ) and 154-175 (PERA…KLTT). The span at 95 to 106 (EEQPMMPYQQPP) shows a compositional bias: low complexity.

This sequence belongs to the asfivirus H171R family.

The protein resides in the virion. This is an uncharacterized protein from African swine fever virus (isolate Pig/Kenya/KEN-50/1950) (ASFV).